A 453-amino-acid polypeptide reads, in one-letter code: Argininosuccinate lyase (453 aa).

This sequence belongs to the lyase 1 family. Argininosuccinate lyase subfamily.

It is found in the cytoplasm. It carries out the reaction 2-(N(omega)-L-arginino)succinate = fumarate + L-arginine. It participates in amino-acid biosynthesis; L-arginine biosynthesis; L-arginine from L-ornithine and carbamoyl phosphate: step 3/3. This Shewanella loihica (strain ATCC BAA-1088 / PV-4) protein is Argininosuccinate lyase.